Consider the following 351-residue polypeptide: Ribosomal RNA small subunit methyltransferase H (351 aa).

S-adenosyl-L-methionine is bound by residues 48 to 50, D67, F94, D115, and Q122; that span reads GGY. Residues 274–351 form a disordered region; that stretch reads AAQASRHVPG…PAPQGRGPRR (78 aa).

Belongs to the methyltransferase superfamily. RsmH family.

It is found in the cytoplasm. The enzyme catalyses cytidine(1402) in 16S rRNA + S-adenosyl-L-methionine = N(4)-methylcytidine(1402) in 16S rRNA + S-adenosyl-L-homocysteine + H(+). Its function is as follows. Specifically methylates the N4 position of cytidine in position 1402 (C1402) of 16S rRNA. This Methylorubrum extorquens (strain ATCC 14718 / DSM 1338 / JCM 2805 / NCIMB 9133 / AM1) (Methylobacterium extorquens) protein is Ribosomal RNA small subunit methyltransferase H.